Here is a 362-residue protein sequence, read N- to C-terminus: NAD(P)H-quinone oxidoreductase subunit 1, chloroplastic (362 aa).

Helical transmembrane passes span 29-49 (ILPILTLLLGITIEVLVIVWL), 103-123 (IAVISILLSFLVIPLGYHFVL), 128-148 (IGVFLWIAISSIAPIGLLMAG), 164-184 (AAQSISYEIPLTFCVLAISLL), 202-222 (FFGWNIWRQPIGFLVFLISSL), 247-267 (YSGIKYGLFYLVSYLNLLVSS), 303-323 (TIGIFITLTKAYLFLFISITI), and 335-355 (LLNLGWKFLLPISLGNLLLTT).

Belongs to the complex I subunit 1 family. NDH is composed of at least 16 different subunits, 5 of which are encoded in the nucleus.

Its subcellular location is the plastid. The protein localises to the chloroplast thylakoid membrane. The enzyme catalyses a plastoquinone + NADH + (n+1) H(+)(in) = a plastoquinol + NAD(+) + n H(+)(out). It carries out the reaction a plastoquinone + NADPH + (n+1) H(+)(in) = a plastoquinol + NADP(+) + n H(+)(out). Functionally, NDH shuttles electrons from NAD(P)H:plastoquinone, via FMN and iron-sulfur (Fe-S) centers, to quinones in the photosynthetic chain and possibly in a chloroplast respiratory chain. The immediate electron acceptor for the enzyme in this species is believed to be plastoquinone. Couples the redox reaction to proton translocation, and thus conserves the redox energy in a proton gradient. The sequence is that of NAD(P)H-quinone oxidoreductase subunit 1, chloroplastic from Agrostis stolonifera (Creeping bentgrass).